Reading from the N-terminus, the 87-residue chain is Small ribosomal subunit protein bS16 (87 aa).

Belongs to the bacterial ribosomal protein bS16 family.

This Buchnera aphidicola subsp. Baizongia pistaciae (strain Bp) protein is Small ribosomal subunit protein bS16.